The chain runs to 98 residues: Acylphosphatase (98 aa).

An Acylphosphatase-like domain is found at 12–98 (TYYVRVRGVV…EKRFERFQQQ (87 aa)). Active-site residues include R27 and N45.

The protein belongs to the acylphosphatase family.

It catalyses the reaction an acyl phosphate + H2O = a carboxylate + phosphate + H(+). In Burkholderia cenocepacia (strain HI2424), this protein is Acylphosphatase (acyP).